The sequence spans 2345 residues: MSDDPLLSSPTEAICLNHSVTDLRLAAALKLSWTFLLAHYSGSSEIPLDIRLEYRYIDGSETNFEPFDATFEVDKKSLIEDSIGMIQNMLTPSTRPHSLSNGINSSQSDKHVPEAQVSFTFSSGSRPVLEKGATTRYAATVLELECLQGLKKEYLCRINFNRMMWNVEEATGILRQFRHIAQQIVSADVCATLSQINLMCESDIEQLKRWNSTVPDPVLACIHELFSEQAKKNPTATAVQTSEGSFDYGRLDELSSALACHLSSNGLTRGTPVPLLFDKSMWMVVATLAVLKAGATCVSICTGLPTKAIEDILEQTAAQLVLVSESQGLRLSETRTQVVSDKTMQIWHTMSGKPELPQSDPTDLACIIFTSGSTGKPKGIMLDHIALVTSIRNHGPSLGISSSSRALQFSSYAFDMSFYETYTTLLSGGCICIPSETERLNSLPQFICDHNVNWAFLTPSVLRDFHPSEFPSLRTLATGGEPVGADIANEWAGRLQLFNLWGPAEATICATGPILPGVWIPGTFGKAVGCIAWITQAENPDELVPIGAVGEVLIEGPVLAQGYSGDVEKTKASFIPFPKWRERFELTPRGRVLFRTGDLAQYNPDGTIRYVGRMGTVVKVGGQRVDIDAVEYALRRIDRSSHIAVEAVELEKETGQGPTLIAFLSSDMNGVSGSEKKRCCSIDPGSRSWEAWANIAIRLQDTLAGVLPRYMIPHLFIPVSTIPTTPSGKANKRQLQALVLGQSKAHLLQLCRQRSPDASYPEQHLTENETLLRLLVSDVLGIDRDHVAMNSRFFHLGGDSLAAVKLVALARQQGIQLKVEAILQSCSLREAAGTMISAGEKQKLQSKTSFAINKCDDKLGLLEEATVQCGISESDIEEIYPSTPLQEGLITVTSTFSASKPYVDKILFTLSATADLDRVRDAWNHVVAANDILRSRIILSPAGKAFNVVVRSEPSWQYYKTVQQYLENDNAQDMTFGKELITFNLIASHDQSASARSIGITIHHALYDNWTVSLLHKQAEDAYRGELVEPCSFSTFSHYVLQQSPDINKEFWRKQFLDLRAGTFPELPSSDYVPRANSSSQHLYKGQHQRRDFSMATNIQLAWALLLSLYTNSPDVVYGLVVNGRMAPMPGVGGLVGPTIATVPFRTTVERSMSVQAALEAIQKRVLSIVPFEQTGLQNIARMGEGPKTACNFQNLLVIQQDLEFKGEGIFCRRQNLVGAVNNFPGYGIILLCSATEHGWAFEILYSNSLIPETRARRILLQLDHLLRQLEVDPYRQLAQLELLCPSDKSKLTSWNTQLPIRVNACIPEVFGAQCLVRSERTAVSAWDGSLSYRELDRFSSIVARHLQAVGVGKGTITPILFEKSRWVVVAMLAVLKTGAAFVMLDTNQPLQRKQGICRAVRATTIATSASCAHESKVLANSIYVLDEASITKTDTNQFLPLVEVSPNDLAYVVFTSGSTGEPKGVLIEHASSCSASRAQAAKLGISPDSRVLQLSSYTFDSFAVEILASLLAGCCICIPSESESSNDIAGAVRRFSATWLCITPSVLGLTNPDEVPSLKTVVAVGESARPSQIRLWSTRVNFICGYGPSECSTGASAQLIRSAGSDPRIIGSGMGSCLWVAHTDDHNVLVPIGAIGELLIQGPIVGRGYMNSPEKTRAAFLESTAWIPEFRQVATERFYKTGDLVRQNEDGSIVYLGRKNREVKLRGQRLDLEEVENQLSAALEMDINIVAEVVKPKGVDSQPVLIAFFQVVADVELRSDNITFLELNPDIGLRLLDAEEKLRKILPPVMIPSVYLQVQRMPLTMSGKMNRQALRNKASTRTLSQLFSSGSVRHEDDYLTLQPHESTALFVCQAICGIMRDKIDDTKTLIAGKNVNLSRTGMDSIDAMMLARTISRHFGITLSIRAFLGSSVTVRDIARLIEGVKSEDNLSQFDLYAKYESIWEELRGVVRGLTPSDKPQLCDKTPAGMSVFLTGGTGFLGTHILRQILQDPRVELVTVLTRAESPAHALSKIVESAKIAQWWQESYRNRIDAWVGDLARPRLGLSDDHWARLCGYGEHKFTSIIHNGAAVHWGYDFEKLKPVNVMSTFWLLVSLFIAGPLVNFTYVSALLPECDGLTDREIALKTSDDGYSQTKYVSELLVKNFKEQLCNNPIAIVRPGLLIGSAEHGVANVGDYLWRVVSSAFSVGAYISEKGDAWIYIAAVDWVANQVIREALYESTTDLRIINVTDGLTVKEFWRAIQIASPRQLNALQSEDWLSLIRQQLDVTGKSHPLWPVISFLESSKGCLGFSHNLPPQAHSLSSMIITALIKNVRYLASLGLVSWTTTGSNCDHSVQQRIFRRVL.

The adenylation 1 stretch occupies residues 226–620 (FSEQAKKNPT…VGRMGTVVKV (395 aa)). The 74-residue stretch at 766 to 839 (TENETLLRLL…EAAGTMISAG (74 aa)) folds into the Carrier 1 domain. S800 is modified (O-(pantetheine 4'-phosphoryl)serine). The condensation 1 stretch occupies residues 877–1292 (EEIYPSTPLQ…LLCPSDKSKL (416 aa)). An adenylation 2 region spans residues 1317-1707 (VRSERTAVSA…GRKNREVKLR (391 aa)). The region spanning 1843–1926 (QPHESTALFV…DIARLIEGVK (84 aa)) is the Carrier 2 domain. S1885 carries the O-(pantetheine 4'-phosphoryl)serine modification. A reductase (R) domain region spans residues 1969–2256 (GMSVFLTGGT…PRQLNALQSE (288 aa)).

Belongs to the NRP synthetase family.

It carries out the reaction L-proline + L-tryptophan + 2 ATP + NADPH = (S)-3-(indol-3-ylmethyl)-6,7,8,8a-tetrahydropyrrolo[1,2-a]pyrazin-1-one + 2 AMP + 2 diphosphate + NADP(+) + H2O + H(+). Nonribisomal peptide synthetase; part of the gene cluster that mediates the biosynthesis of malbrancheamide, a dichlorinated fungal indole alkaloid that belongs to a family of natural products containing a characteristic bicyclo[2.2.2]diazaoctane core. The first step of malbrancheamide biosynthesis involves coupling of L-proline and L-tryptophan by malG, a bimodular NRPS, to produce L-Pro-L-Trp aldehyde through reductive offloading. This compound undergoes spontaneous cyclization and dehydration to give a dienamine which is reverse prenylated at C-2 by malE. The other prenyltransferase present in the cluster, malB, displays modest activity, suggesting that may be a redundant gene in the pathway. Subsequently, a [4+2] Diels-Alder cyclo-addition catalyzed by the bifunctional enzyme malC forms the characteristic bicyclo[2.2.2]diazaoctane ring of premalbrancheamid. Finally, the flavin-dependent halogenase malA catalyzes the iterative dichlorination of the indole ring of premalbrancheamide to yield C-9 monochlorinated malbrancheamide B, C-8 monochlorinated isomalbrancheamide B, and dichlorinated malbrancheamide. MalA is also able to brominate premalbrancheamide at C-9 to yield malbrancheamide C, and, to a lesser extend, at C-8 to yield isomalbrancheamide C. Finally, malA can brominate C-9 monochlorinated malbrancheamide B at C-8 to yield malbrancheamide D, or C-8 monochlorinated isomalbrancheamide B at C-9 to produce isomalbrancheamide D. The chain is Nonribisomal peptide synthetase malG from Malbranchea aurantiaca.